A 258-amino-acid polypeptide reads, in one-letter code: Phosphate import ATP-binding protein PstB 3 (258 aa).

In terms of domain architecture, ABC transporter spans 10–253 (MTARSLAVHY…PANSLTQGYI (244 aa)). An ATP-binding site is contributed by 42 to 49 (GPSGCGKS).

It belongs to the ABC transporter superfamily. Phosphate importer (TC 3.A.1.7) family. As to quaternary structure, the complex is composed of two ATP-binding proteins (PstB), two transmembrane proteins (PstC and PstA) and a solute-binding protein (PstS).

Its subcellular location is the cell inner membrane. It carries out the reaction phosphate(out) + ATP + H2O = ADP + 2 phosphate(in) + H(+). Its function is as follows. Part of the ABC transporter complex PstSACB involved in phosphate import. Responsible for energy coupling to the transport system. This is Phosphate import ATP-binding protein PstB 3 from Paramagnetospirillum magneticum (strain ATCC 700264 / AMB-1) (Magnetospirillum magneticum).